A 48-amino-acid chain; its full sequence is Putative ATP synthase protein 8-like protein (48 aa).

Residues 17–37 form a helical membrane-spanning segment; it reads GFLVILLTLLLLSYAFLSMIL.

The protein belongs to the ATPase protein 8 family.

It localises to the membrane. In Eremothecium gossypii (strain ATCC 10895 / CBS 109.51 / FGSC 9923 / NRRL Y-1056) (Yeast), this protein is Putative ATP synthase protein 8-like protein.